We begin with the raw amino-acid sequence, 105 residues long: Mini zinc finger protein 1 (105 aa).

A disordered region spans residues 1 to 29; that stretch reads MGPQQDRSAAKPYANGSTAAAAAAGRKEN. Residues 35–84 form a ZF-HD dimerization-type; degenerate zinc finger; that stretch reads YRECQRNHAASIGGHAVDGCREFMASGAEGTAAALLCAACGCHRSFHRRE.

Homo- and heterodimers.

It is found in the cytoplasm. Its function is as follows. Inhibits zinc finger homeodomain (ZHD) transcription factors, by interacting with them to prevent both their nuclear localization and their DNA-binding properties. In Oryza sativa subsp. indica (Rice), this protein is Mini zinc finger protein 1 (MIF1).